Reading from the N-terminus, the 33-residue chain is Mytimycin (33 aa).

It is found in the secreted. Functionally, has antifungal activity against N.crassa and F.culmorum. In Mytilus edulis (Blue mussel), this protein is Mytimycin.